Reading from the N-terminus, the 518-residue chain is Membrane-bound lytic murein transglycosylase F (518 aa).

A signal peptide spans 1–21; sequence MKKLKINYLFIGILALLLAVA. Positions 22-269 are non-LT domain; the sequence is LWPSIPWFGK…RIEEKYLGHG (248 aa). Residues 270–518 form an LT domain region; the sequence is DDFDYVDTRT…SRKGSEEKQN (249 aa). The active site involves Glu-314.

It in the N-terminal section; belongs to the bacterial solute-binding protein 3 family. In the C-terminal section; belongs to the transglycosylase Slt family.

The protein localises to the cell outer membrane. The catalysed reaction is Exolytic cleavage of the (1-&gt;4)-beta-glycosidic linkage between N-acetylmuramic acid (MurNAc) and N-acetylglucosamine (GlcNAc) residues in peptidoglycan, from either the reducing or the non-reducing ends of the peptidoglycan chains, with concomitant formation of a 1,6-anhydrobond in the MurNAc residue.. Murein-degrading enzyme that degrades murein glycan strands and insoluble, high-molecular weight murein sacculi, with the concomitant formation of a 1,6-anhydromuramoyl product. Lytic transglycosylases (LTs) play an integral role in the metabolism of the peptidoglycan (PG) sacculus. Their lytic action creates space within the PG sacculus to allow for its expansion as well as for the insertion of various structures such as secretion systems and flagella. The protein is Membrane-bound lytic murein transglycosylase F of Shigella boydii serotype 18 (strain CDC 3083-94 / BS512).